The following is a 941-amino-acid chain: Pre-mRNA-processing factor 6 (941 aa).

A disordered region spans residues 1 to 79 (MNKKKKPFLG…DEDLNDTNYD (79 aa)). Positions 39–65 (DANDPVDDRHAPPGKRTVGDQMKKNQA) are enriched in basic and acidic residues. Positions 66–78 (ADDDDEDLNDTNY) are enriched in acidic residues. S143 carries the phosphoserine modification. 3 positions are modified to phosphothreonine: T180, T266, and T275. Position 279 is a phosphoserine (S279). 9 HAT repeats span residues 384 to 416 (TDIRAKKRVLRKALEHVPNSVRLWKAAVELEEP), 418 to 444 (DARIMLSRAVECCPTSVELWLALARLE), 445 to 476 (TYENARKVLNKARENIPTDRHIWITAAKLEEA), 554 to 586 (NALECARAIYAYALQVFPSKKSVWLRAAYFEKN), 588 to 620 (GTRESLEALLQRAVAHCPKAEVLWLMGAKSKWL), 622 to 654 (GDVPAARSILALAFQANPNSEEIWLAAVKLESE), 689 to 721 (GNITAAQELCEEALRHYEDFPKLWMMKGQIEEQ), 723 to 755 (ELMERAREAYNQGLKKCPHSTPLWLLLSRLEEK), and 855 to 887 (RKITKAREWFHRTVKIDSDLGDAWAFFYKFELQ).

In terms of assembly, identified in the spliceosome B complex. Identified in the spliceosome C complex. Associates with the U5 snRNP particle. Component of the U4/U6-U5 tri-snRNP complex composed of the U4, U6 and U5 snRNAs and at least PRPF3, PRPF4, PRPF6, PRPF8, PRPF31, SNRNP200, TXNL4A, SNRNP40, DDX23, CD2BP2, PPIH, SNU13, EFTUD2, SART1 and USP39, LSm proteins LSm2-8 and Sm proteins. Interacts with ARAF1. Interacts with AR and NR3C1, but not ESR1, independently of the presence of hormones. Interacts with USH1G. Post-translationally, phosphorylated by PRP4K during spliceosome assembly.

It is found in the nucleus. The protein localises to the nucleoplasm. The protein resides in the nucleus speckle. Its function is as follows. Involved in pre-mRNA splicing as component of the U4/U6-U5 tri-snRNP complex, one of the building blocks of the spliceosome. Enhances dihydrotestosterone-induced transactivation activity of AR, as well as dexamethasone-induced transactivation activity of NR3C1, but does not affect estrogen-induced transactivation. This is Pre-mRNA-processing factor 6 (Prpf6) from Rattus norvegicus (Rat).